Consider the following 83-residue polypeptide: Small ribosomal subunit protein bS16 (83 aa).

The protein belongs to the bacterial ribosomal protein bS16 family.

The chain is Small ribosomal subunit protein bS16 from Cupriavidus taiwanensis (strain DSM 17343 / BCRC 17206 / CCUG 44338 / CIP 107171 / LMG 19424 / R1) (Ralstonia taiwanensis (strain LMG 19424)).